A 142-amino-acid chain; its full sequence is MAAMTVQLDIVSAESSIFSGRVASLQVTGSEGELGIMHGHAPLLSYIKPGMARIVKQDGNEEVFYLSGGLLEVQPSSVSVLADVVMRAKDIDEQAALEAKRRAEAHMATAGADFNYDAAMVELAKAMAQLRVVETIKKNIAR.

Belongs to the ATPase epsilon chain family. In terms of assembly, F-type ATPases have 2 components, CF(1) - the catalytic core - and CF(0) - the membrane proton channel. CF(1) has five subunits: alpha(3), beta(3), gamma(1), delta(1), epsilon(1). CF(0) has three main subunits: a, b and c.

Its subcellular location is the cell inner membrane. Its function is as follows. Produces ATP from ADP in the presence of a proton gradient across the membrane. The sequence is that of ATP synthase epsilon chain from Shewanella oneidensis (strain ATCC 700550 / JCM 31522 / CIP 106686 / LMG 19005 / NCIMB 14063 / MR-1).